A 329-amino-acid polypeptide reads, in one-letter code: Glycerol-3-phosphate dehydrogenase [NAD(P)+] (329 aa).

The NADPH site is built by Trp-11, Arg-31, and Lys-105. Positions 105, 135, and 137 each coordinate sn-glycerol 3-phosphate. Ala-139 contributes to the NADPH binding site. Sn-glycerol 3-phosphate contacts are provided by Lys-190, Asp-243, Ser-253, Arg-254, and Asn-255. The active-site Proton acceptor is the Lys-190. An NADPH-binding site is contributed by Arg-254. NADPH-binding residues include Val-277 and Glu-279.

The protein belongs to the NAD-dependent glycerol-3-phosphate dehydrogenase family.

It is found in the cytoplasm. It catalyses the reaction sn-glycerol 3-phosphate + NAD(+) = dihydroxyacetone phosphate + NADH + H(+). The enzyme catalyses sn-glycerol 3-phosphate + NADP(+) = dihydroxyacetone phosphate + NADPH + H(+). The protein operates within membrane lipid metabolism; glycerophospholipid metabolism. In terms of biological role, catalyzes the reduction of the glycolytic intermediate dihydroxyacetone phosphate (DHAP) to sn-glycerol 3-phosphate (G3P), the key precursor for phospholipid synthesis. The sequence is that of Glycerol-3-phosphate dehydrogenase [NAD(P)+] from Maridesulfovibrio salexigens (strain ATCC 14822 / DSM 2638 / NCIMB 8403 / VKM B-1763) (Desulfovibrio salexigens).